Reading from the N-terminus, the 421-residue chain is Proton/sodium-glutamate symport protein (421 aa).

At methionine 1 to lysine 3 the chain is on the cytoplasmic side. The chain crosses the membrane as a helical span at residues isoleucine 4 to phenylalanine 24. The Extracellular segment spans residues tyrosine 25–arginine 43. Residues leucine 44–valine 64 form a helical membrane-spanning segment. Over glycine 65–threonine 77 the chain is Cytoplasmic. A helical membrane pass occupies residues isoleucine 78–isoleucine 98. The Extracellular portion of the chain corresponds to phenylalanine 99–threonine 148. A helical membrane pass occupies residues glycine 149–glycine 169. The Cytoplasmic segment spans residues glutamate 170–proline 198. A helical transmembrane segment spans residues phenylalanine 199–proline 219. The Extracellular portion of the chain corresponds to leucine 220–lysine 222. The helical transmembrane segment at leucine 223–alanine 243 threads the bilayer. Lysine 244 is a topological domain (cytoplasmic). The helical transmembrane segment at leucine 245 to tyrosine 265 threads the bilayer. The Extracellular portion of the chain corresponds to serine 266–serine 306. Residues threonine 307–valine 327 form a helical membrane-spanning segment. The Cytoplasmic portion of the chain corresponds to serine 328–glutamine 330. 2 consecutive transmembrane segments (helical) span residues isoleucine 331–serine 351 and phenylalanine 352–isoleucine 372. Residues alanine 373–alanine 421 are Cytoplasmic-facing.

The protein belongs to the dicarboxylate/amino acid:cation symporter (DAACS) (TC 2.A.23) family. As to quaternary structure, homotrimer.

The protein localises to the cell membrane. Its function is as follows. This carrier protein is part of the Na(+)-dependent, binding-protein-independent glutamate-aspartate transport system. The chain is Proton/sodium-glutamate symport protein (gltT) from Bacillus caldotenax.